Here is a 319-residue protein sequence, read N- to C-terminus: Coproporphyrin III ferrochelatase 2 (319 aa).

Fe-coproporphyrin III is bound by residues Tyr13, Arg30, Arg46–Tyr47, Ser54, and Tyr125. His181 and Glu262 together coordinate Fe(2+).

This sequence belongs to the ferrochelatase family.

The protein localises to the cytoplasm. The catalysed reaction is Fe-coproporphyrin III + 2 H(+) = coproporphyrin III + Fe(2+). It participates in porphyrin-containing compound metabolism; protoheme biosynthesis. Functionally, involved in coproporphyrin-dependent heme b biosynthesis. Catalyzes the insertion of ferrous iron into coproporphyrin III to form Fe-coproporphyrin III. The chain is Coproporphyrin III ferrochelatase 2 from Bacillus anthracis.